Here is a 1284-residue protein sequence, read N- to C-terminus: 1,6-alpha-glucosyltransferase (1284 aa).

An N-terminal signal peptide occupies residues 1-35 (MRPPNKEIPRILAFFTAFTLFGSTLALLPAPPAHA). Aspartate 433 functions as the Nucleophile in the catalytic mechanism. Aspartate 436 is a catalytic residue. Residue aspartate 495 is the Proton donor of the active site. CBM6 domains lie at 856 to 988 (SQYE…ITVP) and 994 to 1120 (GKYE…LLLS).

The protein belongs to the glycosyl hydrolase 31 family.

The protein resides in the secreted. It catalyses the reaction 2 D-maltotetraose = alpha-isomaltosyl-(1-&gt;4)-D-maltotriose + D-maltotriose. The catalysed reaction is Transfers an alpha-D-glucosyl residue in a (1-&gt;4)-alpha-D-glucan to the primary hydroxy group of glucose, free or combined in a (1-&gt;4)-alpha-D-glucan.. With respect to regulation, strongly activated and stabilized by various divalent cations. Strongly inhibited by Cu(2+), Hg(2+) and EDTA, and moderately inhibited by Tris. In terms of biological role, glycosyltransferase involved, together with CtsY, in the conversion of alpha-1,4-glucan into a cyclic tetrasaccharide (CTS) constructed from four alpha-glucopyranosyl residues. Catalyzes an intermolecular transglucosylation in which a glucose residue at the non-reducing end of maltotetraose is transferred to the 6-OH of an other non-reducing glucose, leading to the formation of alpha-isomaltosyl-(1-&gt;4)-D-maltotriose. Has a wide substrate specificity, and acts on oligosaccharides with alpha-1,4-glucosidic linkages at the non-reducing end, except for maltose. In contrast, has little activity toward oligosaccharides with alpha-1,6-glucosidic linkages at the non-reducing end. In Sporosarcina globispora (Bacillus globisporus), this protein is 1,6-alpha-glucosyltransferase.